The sequence spans 274 residues: NAD(P)H-quinone oxidoreductase subunit K, chloroplastic (274 aa).

Polar residues-rich tracts occupy residues Met1–Ser10 and Ser18–Asp27. Residues Met1–Asp27 form a disordered region. [4Fe-4S] cluster contacts are provided by Cys90, Cys91, Cys155, and Cys186.

Belongs to the complex I 20 kDa subunit family. As to quaternary structure, NDH is composed of at least 16 different subunits, 5 of which are encoded in the nucleus. Requires [4Fe-4S] cluster as cofactor.

The protein localises to the plastid. It localises to the chloroplast thylakoid membrane. It catalyses the reaction a plastoquinone + NADH + (n+1) H(+)(in) = a plastoquinol + NAD(+) + n H(+)(out). The catalysed reaction is a plastoquinone + NADPH + (n+1) H(+)(in) = a plastoquinol + NADP(+) + n H(+)(out). Its function is as follows. NDH shuttles electrons from NAD(P)H:plastoquinone, via FMN and iron-sulfur (Fe-S) centers, to quinones in the photosynthetic chain and possibly in a chloroplast respiratory chain. The immediate electron acceptor for the enzyme in this species is believed to be plastoquinone. Couples the redox reaction to proton translocation, and thus conserves the redox energy in a proton gradient. In Chlorokybus atmophyticus (Soil alga), this protein is NAD(P)H-quinone oxidoreductase subunit K, chloroplastic.